The primary structure comprises 333 residues: Biotin synthase (333 aa).

Positions 47–276 constitute a Radical SAM core domain; sequence ADIQRASLLS…KARVRLSAGR (230 aa). [4Fe-4S] cluster is bound by residues Cys-62, Cys-66, and Cys-69. The [2Fe-2S] cluster site is built by Cys-107, Cys-139, Cys-199, and Arg-271.

It belongs to the radical SAM superfamily. Biotin synthase family. Homodimer. It depends on [4Fe-4S] cluster as a cofactor. Requires [2Fe-2S] cluster as cofactor.

The enzyme catalyses (4R,5S)-dethiobiotin + (sulfur carrier)-SH + 2 reduced [2Fe-2S]-[ferredoxin] + 2 S-adenosyl-L-methionine = (sulfur carrier)-H + biotin + 2 5'-deoxyadenosine + 2 L-methionine + 2 oxidized [2Fe-2S]-[ferredoxin]. The protein operates within cofactor biosynthesis; biotin biosynthesis; biotin from 7,8-diaminononanoate: step 2/2. Catalyzes the conversion of dethiobiotin (DTB) to biotin by the insertion of a sulfur atom into dethiobiotin via a radical-based mechanism. The sequence is that of Biotin synthase from Methylobacterium nodulans (strain LMG 21967 / CNCM I-2342 / ORS 2060).